The sequence spans 55 residues: Ferredoxin (55 aa).

4Fe-4S ferredoxin-type domains follow at residues 2–27 (FVINDSCVSCGACAGECPVSAITQGD) and 28–55 (TQFVIDADTCIDCGNCANVCPVGAPNQE). [4Fe-4S] cluster-binding residues include Cys-8, Cys-11, Cys-14, Cys-18, Cys-37, Cys-40, Cys-43, and Cys-47.

It depends on [4Fe-4S] cluster as a cofactor.

Functionally, ferredoxins are iron-sulfur proteins that transfer electrons in a wide variety of metabolic reactions. This Clostridium butyricum protein is Ferredoxin.